The chain runs to 501 residues: Type II secretion system protein E (501 aa).

262 to 269 (GPTGSGKS) contributes to the ATP binding site. Residues C395, C398, C428, and C431 each contribute to the Zn(2+) site.

Belongs to the GSP E family. Forms homooligomers; most probably hexamers. Interacts with ExeL/GspL. It depends on Zn(2+) as a cofactor.

It localises to the cell inner membrane. It carries out the reaction ATP + H2O + cellular proteinSide 1 = ADP + phosphate + cellular proteinSide 2.. Functionally, ATPase component of the type II secretion system required for the energy-dependent secretion of extracellular factors such as proteases and toxins from the periplasm. Acts as a molecular motor to provide the energy that is required for assembly of the pseudopilus and the extrusion of substrates generated in the cytoplasm. The protein is Type II secretion system protein E (exeE) of Aeromonas hydrophila.